We begin with the raw amino-acid sequence, 335 residues long: Biotin synthase (335 aa).

One can recognise a Radical SAM core domain in the interval 46–274 (YKVQLASLFS…KSKIRLSAGR (229 aa)). [4Fe-4S] cluster contacts are provided by cysteine 61, cysteine 65, and cysteine 68. Positions 105, 137, 197, and 269 each coordinate [2Fe-2S] cluster.

The protein belongs to the radical SAM superfamily. Biotin synthase family. Homodimer. [4Fe-4S] cluster serves as cofactor. [2Fe-2S] cluster is required as a cofactor.

The enzyme catalyses (4R,5S)-dethiobiotin + (sulfur carrier)-SH + 2 reduced [2Fe-2S]-[ferredoxin] + 2 S-adenosyl-L-methionine = (sulfur carrier)-H + biotin + 2 5'-deoxyadenosine + 2 L-methionine + 2 oxidized [2Fe-2S]-[ferredoxin]. It functions in the pathway cofactor biosynthesis; biotin biosynthesis; biotin from 7,8-diaminononanoate: step 2/2. Its function is as follows. Catalyzes the conversion of dethiobiotin (DTB) to biotin by the insertion of a sulfur atom into dethiobiotin via a radical-based mechanism. In Prochlorococcus marinus (strain MIT 9515), this protein is Biotin synthase.